The chain runs to 446 residues: Glutamate-1-semialdehyde 2,1-aminomutase (446 aa).

At lysine 278 the chain carries N6-(pyridoxal phosphate)lysine.

It belongs to the class-III pyridoxal-phosphate-dependent aminotransferase family. HemL subfamily. In terms of assembly, homodimer. Pyridoxal 5'-phosphate is required as a cofactor.

It localises to the cytoplasm. The enzyme catalyses (S)-4-amino-5-oxopentanoate = 5-aminolevulinate. It functions in the pathway porphyrin-containing compound metabolism; protoporphyrin-IX biosynthesis; 5-aminolevulinate from L-glutamyl-tRNA(Glu): step 2/2. In Deinococcus geothermalis (strain DSM 11300 / CIP 105573 / AG-3a), this protein is Glutamate-1-semialdehyde 2,1-aminomutase.